The sequence spans 219 residues: Elongation factor Ts, chloroplastic (219 aa).

Belongs to the EF-Ts family.

The protein localises to the plastid. It localises to the chloroplast. Its function is as follows. Associates with the EF-Tu.GDP complex and induces the exchange of GDP to GTP. It remains bound to the aminoacyl-tRNA.EF-Tu.GTP complex up to the GTP hydrolysis stage on the ribosome. This chain is Elongation factor Ts, chloroplastic (tsf), found in Guillardia theta (Cryptophyte).